Reading from the N-terminus, the 5488-residue chain is Polyketide synthase PksN (5488 aa).

The segment at 3–301 (RQLKSPLSEG…NMMAVRSKNI (299 aa)) is condensation. The WD 1 repeat unit spans residues 165–205 (QQPSTADYYDFVDWENRMLTGREGEEHLAYWKEQLSGSLPV). The tract at residues 493 to 903 (TYKEVDEKST…EFPGILDQAV (411 aa)) is adenylation. A WD 2 repeat occupies 965–1006 (RKELEKREIVFNRRKPNHLQLTEIEDQVLRIWEETLKVSGFG). The Carrier 1 domain occupies 983 to 1058 (LQLTEIEDQV…AISEYILEMK (76 aa)). S1018 carries the post-translational modification O-(pantetheine 4'-phosphoryl)serine. The region spanning 1089–1515 (DDSVAIVGIS…GTNAHAIFEQ (427 aa)) is the Ketosynthase family 3 (KS3) 1 domain. Catalysis depends on for beta-ketoacyl synthase 1 activity residues C1261, H1397, and H1437. Residues 1700–1826 (HPLVHHNTSV…GKAELIQLKR (127 aa)) are N-terminal hotdog fold 1. The region spanning 1700 to 1992 (HPLVHHNTSV…TRVMEADIQT (293 aa)) is the PKS/mFAS DH 1 domain. H1729 (proton acceptor; for dehydratase activity 1) is an active-site residue. The tract at residues 1840–1992 (DQSKMDAASF…TRVMEADIQT (153 aa)) is C-terminal hotdog fold 1. D1900 functions as the Proton donor; for dehydratase activity 1 in the catalytic mechanism. A WD 3 repeat occupies 2165–2204 (KQAKGDGSKPWKDNGVYLISGGAGGLGHIFAKEIAEQTKN). In terms of domain architecture, Carrier 2 spans 2448-2525 (SLLDKVKAML…AFGKHLSEEY (78 aa)). S2485 carries the O-(pantetheine 4'-phosphoryl)serine modification. Positions 2576 to 3012 (PEPIAIVGIS…GVNAHVIIEE (437 aa)) constitute a Ketosynthase family 3 (KS3) 2 domain. Residues C2747, H2882, and H2928 each act as for beta-ketoacyl synthase 2 activity in the active site. Residues 3038–3109 (KNEARLKEHA…AAEKSGVEDV (72 aa)) are a coiled coil. The segment at 3207–3332 (HPLMHQNTSN…GSAVLNPAEN (126 aa)) is N-terminal hotdog fold 2. Residues 3207 to 3492 (HPLMHQNTSN…FRAAEGGSGS (286 aa)) form the PKS/mFAS DH 2 domain. H3236 acts as the Proton acceptor; for dehydratase activity 2 in catalysis. Positions 3346 to 3492 (QESHFSVNEV…FRAAEGGSGS (147 aa)) are C-terminal hotdog fold 2. D3408 acts as the Proton donor; for dehydratase activity 2 in catalysis. The stretch at 3626-3655 (DSHENVESVIEKLKENKRHTEDQHIKYEKG) forms a coiled coil. A WD 4 repeat occupies 3666–3705 (QIDDREISMPWRDKGVYLITGGAGGLGFIFAKEIARQAEQ). The region spanning 3952–4026 (DHIQEVLKQT…AFAGYLSEEY (75 aa)) is the Carrier 3 domain. S3986 is subject to O-(pantetheine 4'-phosphoryl)serine. Residues 4076 to 4511 (PEPIAIVGMS…GVNAHVVIEE (436 aa)) form the Ketosynthase family 3 (KS3) 3 domain. Active-site for beta-ketoacyl synthase 3 activity residues include C4245, H4380, and H4427. The tract at residues 4706–4830 (HPLIHVNTSD…GSASIRGAGD (125 aa)) is N-terminal hotdog fold 3. Residues 4706 to 4988 (HPLIHVNTSD…SRLLEEGIQP (283 aa)) enclose the PKS/mFAS DH 3 domain. H4735 serves as the catalytic Proton acceptor; for dehydratase activity 3. Residues 4844-4988 (SLSTLSHDQC…SRLLEEGIQP (145 aa)) are C-terminal hotdog fold 3. D4906 (proton donor; for dehydratase activity 3) is an active-site residue. The WD 5 repeat unit spans residues 5206–5244 (HNNQPVHTKYKHGGVYVVIGGAGGIGEAWSEYMIRTYQA). A coiled-coil region spans residues 5275–5303 (IQADAANREELERAYETMKQTHREINGII).

This sequence belongs to the ATP-dependent AMP-binding enzyme family. Pantetheine 4'-phosphate serves as cofactor.

It localises to the cytoplasm. It participates in antibiotic biosynthesis; bacillaene biosynthesis. In terms of biological role, involved in some intermediate steps for the synthesis of the antibiotic polyketide bacillaene which is involved in secondary metabolism. This Bacillus subtilis (strain 168) protein is Polyketide synthase PksN (pksN).